Consider the following 268-residue polypeptide: AB hydrolase superfamily protein YisY (268 aa).

Residues 23–254 (PIIFLHGWPL…NSGHGAFYEE (232 aa)) form the AB hydrolase-1 domain. Active-site residues include S96, D220, and H248.

The protein belongs to the AB hydrolase superfamily.

The chain is AB hydrolase superfamily protein YisY (yisY) from Bacillus subtilis (strain 168).